Here is a 131-residue protein sequence, read N- to C-terminus: Large ribosomal subunit protein mL60 (131 aa).

Residues 1 to 12 (MFGPFKLTSPVA) constitute a mitochondrion transit peptide.

The protein belongs to the mitochondrion-specific ribosomal protein mL60 family. In terms of assembly, component of the mitochondrial large ribosomal subunit (mt-LSU). Mature yeast 74S mitochondrial ribosomes consist of a small (37S) and a large (54S) subunit. The 37S small subunit contains a 15S ribosomal RNA (15S mt-rRNA) and 34 different proteins. The 54S large subunit contains a 21S rRNA (21S mt-rRNA) and 46 different proteins.

The protein localises to the mitochondrion. Component of the mitochondrial ribosome (mitoribosome), a dedicated translation machinery responsible for the synthesis of mitochondrial genome-encoded proteins, including at least some of the essential transmembrane subunits of the mitochondrial respiratory chain. The mitoribosomes are attached to the mitochondrial inner membrane and translation products are cotranslationally integrated into the membrane. This Saccharomyces cerevisiae (strain ATCC 204508 / S288c) (Baker's yeast) protein is Large ribosomal subunit protein mL60 (MRPL31).